Reading from the N-terminus, the 570-residue chain is Ribosome-inactivating protein SNAIf (570 aa).

A signal peptide spans 1–28; the sequence is MRVVTKLLYLVVLAICGLGIHGALTHTR. 3 N-linked (GlcNAc...) asparagine glycosylation sites follow: Asn-40, Asn-62, and Asn-140. Glu-199 is a catalytic residue. Asn-232 is a glycosylation site (N-linked (GlcNAc...) asparagine). Intrachain disulfides connect Cys-284–Cys-316, Cys-332–Cys-351, and Cys-373–Cys-385. Ricin B-type lectin domains follow at residues 319 to 439 and 441 to 566; these read VEVT…WTVG and VEPL…WITT. Residues 329–369 form a 1-alpha repeat; that stretch reads DGLCVDVRDGHYIDGNTVQLGPCGNECNQLWTFRTDGTIRW. Residues 370–405 form a 1-beta repeat; that stretch reads LGKCLTTSSSVMIYDCNTVPPEATKWVVSTDGTITN. Residues 408 to 440 form a 1-gamma repeat; sequence SGLVLTAPQAAEGTALSLENNIHAARQGWTVGD. Residues 452-489 form a 2-alpha repeat; sequence KQMCLTENGENNFVWLEDCVLNRVEQEWALYGDGTIRV. Cysteines 455 and 470 form a disulfide. An N-linked (GlcNAc...) asparagine glycan is attached at Asn-492. The 2-beta repeat unit spans residues 493-531; it reads RSLCVTSEDHEPSDLIVILKCEGSGNQRWVFNTNGTISN. An intrachain disulfide couples Cys-496 to Cys-513. 2 N-linked (GlcNAc...) asparagine glycosylation sites follow: Asn-526 and Asn-544. The stretch at 534–567 is one 2-gamma repeat; the sequence is AKLVMDVAQSNVSLRKIILYPPTGNPNQQWITTT.

It belongs to the ribosome-inactivating protein family. Type 2 RIP subfamily. As to quaternary structure, tetramer of four pairs of disulfide bound A-B chains. In terms of processing, the precursor is processed in two chains, A and B, that are linked by a disulfide bond. A small truncated form corresponding roughly to the second ricin B-type lectin domain of the B chain, TrSNAIf, can also be produced. Post-translationally, N-glycosylated. As to expression, expressed in fruits.

The catalysed reaction is Endohydrolysis of the N-glycosidic bond at one specific adenosine on the 28S rRNA.. Its function is as follows. Neu5Ac(alpha2-6)Gal/GalNAc specific agglutinin. Behaves as a type-2 ribosome-inactivating protein. Strongly inhibits mammalian but not plant ribosomes. The A chain is responsible for inhibiting protein synthesis through the catalytic inactivation of 60S ribosomal subunits by removing adenine from position 4,324 of 28S rRNA. The B chain binds to cell receptors and probably facilitates the entry into the cell of the A chain; B chains are also responsible for cell agglutination (lectin activity). Involved in plant defense against insects. Functionally, binds Neu5Ac(alpha2-6)Gal/GalNAc but has no clear agglutination activity. The protein is Ribosome-inactivating protein SNAIf of Sambucus nigra (European elder).